The following is a 295-amino-acid chain: Ribosomal protein L11 methyltransferase (295 aa).

Threonine 146, glycine 167, aspartate 189, and asparagine 231 together coordinate S-adenosyl-L-methionine.

The protein belongs to the methyltransferase superfamily. PrmA family.

It localises to the cytoplasm. It carries out the reaction L-lysyl-[protein] + 3 S-adenosyl-L-methionine = N(6),N(6),N(6)-trimethyl-L-lysyl-[protein] + 3 S-adenosyl-L-homocysteine + 3 H(+). Its function is as follows. Methylates ribosomal protein L11. The protein is Ribosomal protein L11 methyltransferase of Vibrio vulnificus (strain CMCP6).